The following is a 390-amino-acid chain: Galactokinase (390 aa).

34–37 provides a ligand contact to substrate; the sequence is EHTD. ATP contacts are provided by residues Ser68 and 122–128; that span reads GSGLSSS. 2 residues coordinate Mg(2+): Ser128 and Glu160. Asp172 serves as the catalytic Proton acceptor. Substrate is bound at residue Tyr221.

It belongs to the GHMP kinase family. GalK subfamily.

The protein localises to the cytoplasm. It catalyses the reaction alpha-D-galactose + ATP = alpha-D-galactose 1-phosphate + ADP + H(+). Its pathway is carbohydrate metabolism; galactose metabolism. Catalyzes the transfer of the gamma-phosphate of ATP to D-galactose to form alpha-D-galactose-1-phosphate (Gal-1-P). The chain is Galactokinase from Chloroflexus aggregans (strain MD-66 / DSM 9485).